Here is a 190-residue protein sequence, read N- to C-terminus: Putative glutathione-dependent formaldehyde-activating enzyme (190 aa).

In terms of domain architecture, CENP-V/GFA spans 19 to 165; the sequence is FKGGKLYCHC…FRKEGLQTYD (147 aa). The Zn(2+) site is built by C26, C28, C47, C49, C52, C94, and C97.

The protein belongs to the Gfa family. Zn(2+) serves as cofactor.

The catalysed reaction is S-(hydroxymethyl)glutathione = glutathione + formaldehyde. The protein operates within one-carbon metabolism; formaldehyde degradation; formate from formaldehyde (glutathione route): step 1/3. Catalyzes the condensation of formaldehyde and glutathione to S-hydroxymethylglutathione. The sequence is that of Putative glutathione-dependent formaldehyde-activating enzyme from Phaeosphaeria nodorum (strain SN15 / ATCC MYA-4574 / FGSC 10173) (Glume blotch fungus).